We begin with the raw amino-acid sequence, 291 residues long: Ribosomal RNA small subunit methyltransferase A (291 aa).

S-adenosyl-L-methionine contacts are provided by histidine 21, leucine 23, glycine 48, glutamate 70, aspartate 95, and asparagine 115.

The protein belongs to the class I-like SAM-binding methyltransferase superfamily. rRNA adenine N(6)-methyltransferase family. RsmA subfamily.

The protein localises to the cytoplasm. It catalyses the reaction adenosine(1518)/adenosine(1519) in 16S rRNA + 4 S-adenosyl-L-methionine = N(6)-dimethyladenosine(1518)/N(6)-dimethyladenosine(1519) in 16S rRNA + 4 S-adenosyl-L-homocysteine + 4 H(+). Functionally, specifically dimethylates two adjacent adenosines (A1518 and A1519) in the loop of a conserved hairpin near the 3'-end of 16S rRNA in the 30S particle. May play a critical role in biogenesis of 30S subunits. This chain is Ribosomal RNA small subunit methyltransferase A, found in Prochlorococcus marinus (strain NATL2A).